Here is a 91-residue protein sequence, read N- to C-terminus: Protein transport protein Sec61 subunit beta (91 aa).

Residues 1–45 are disordered; the sequence is MSTSAQVPGGPAAQMKRRNNAQRQEAKASQRPTSTRSVGAGGSSS. At 1-62 the chain is on the cytoplasmic side; sequence MSTSAQVPGG…DESQGLKVDP (62 aa). The segment covering 30–45 has biased composition (polar residues); sequence QRPTSTRSVGAGGSSS. A helical membrane pass occupies residues 63 to 83; sequence VVVMVLSLGFIFSVVALHILA.

Belongs to the SEC61-beta family. As to quaternary structure, heterotrimeric complex composed of SEC61, SEB1 and SSS1.

The protein resides in the endoplasmic reticulum membrane. In terms of biological role, necessary for protein translocation in the endoplasmic reticulum. The chain is Protein transport protein Sec61 subunit beta (SBH1) from Yarrowia lipolytica (strain CLIB 122 / E 150) (Yeast).